A 904-amino-acid polypeptide reads, in one-letter code: Alanine--tRNA ligase (904 aa).

Zn(2+) is bound by residues His-594, His-598, Cys-695, and His-699.

Belongs to the class-II aminoacyl-tRNA synthetase family. Zn(2+) serves as cofactor.

The protein localises to the cytoplasm. The enzyme catalyses tRNA(Ala) + L-alanine + ATP = L-alanyl-tRNA(Ala) + AMP + diphosphate. Its function is as follows. Catalyzes the attachment of alanine to tRNA(Ala) in a two-step reaction: alanine is first activated by ATP to form Ala-AMP and then transferred to the acceptor end of tRNA(Ala). Also edits incorrectly charged Ser-tRNA(Ala) and Gly-tRNA(Ala) via its editing domain. This is Alanine--tRNA ligase from Anaeromyxobacter sp. (strain Fw109-5).